The primary structure comprises 375 residues: F-box/kelch-repeat protein At4g39240 (375 aa).

A compositionally biased stretch (low complexity) spans 1 to 15 (MPFSAASSSSVSSIA). A disordered region spans residues 1-27 (MPFSAASSSSVSSIAEEPPPKKQHDPS). The 47-residue stretch at 31–77 (SSYLLLLPDEIILNCLARLPKCYYPVISLVSKTFRRLIASPEIYVER) folds into the F-box domain. Kelch repeat units follow at residues 140-186 (EIYV…FFDG), 187-232 (KLYV…RSFA), and 275-321 (KIYT…GNLA).

The chain is F-box/kelch-repeat protein At4g39240 from Arabidopsis thaliana (Mouse-ear cress).